Reading from the N-terminus, the 125-residue chain is PEP-dependent dihydroxyacetone kinase 2, phosphoryl donor subunit DhaM (125 aa).

The region spanning 1-125 (MISIVLVSHS…AILQELTNVH (125 aa)) is the PTS EIIA type-4 domain. His-9 (tele-phosphohistidine intermediate) is an active-site residue.

It belongs to the PEP-utilizing enzyme family. Homodimer. The dihydroxyacetone kinase complex is composed of a homodimer of DhaM, a homodimer of DhaK and the subunit DhaL.

It is found in the cytoplasm. The catalysed reaction is dihydroxyacetone + phosphoenolpyruvate = dihydroxyacetone phosphate + pyruvate. Functionally, component of the dihydroxyacetone kinase complex, which is responsible for the phosphoenolpyruvate (PEP)-dependent phosphorylation of dihydroxyacetone. DhaM serves as the phosphoryl donor. Is phosphorylated by phosphoenolpyruvate in an EI- and HPr-dependent reaction, and a phosphorelay system on histidine residues finally leads to phosphoryl transfer to DhaL and dihydroxyacetone. The sequence is that of PEP-dependent dihydroxyacetone kinase 2, phosphoryl donor subunit DhaM from Listeria innocua serovar 6a (strain ATCC BAA-680 / CLIP 11262).